A 146-amino-acid polypeptide reads, in one-letter code: Prefoldin subunit alpha 1 (146 aa).

It belongs to the prefoldin subunit alpha family. In terms of assembly, heterohexamer of two alpha and four beta subunits.

The protein resides in the cytoplasm. Functionally, molecular chaperone capable of stabilizing a range of proteins. Seems to fulfill an ATP-independent, HSP70-like function in archaeal de novo protein folding. This chain is Prefoldin subunit alpha 1, found in Thermococcus kodakarensis (strain ATCC BAA-918 / JCM 12380 / KOD1) (Pyrococcus kodakaraensis (strain KOD1)).